The chain runs to 85 residues: Probable weak neurotoxin 3FTx-Lio1 (85 aa).

An N-terminal signal peptide occupies residues 1 to 18; the sequence is MKAVILSLVAAFLYSGYT. 5 cysteine pairs are disulfide-bonded: cysteine 21-cysteine 42, cysteine 24-cysteine 29, cysteine 35-cysteine 60, cysteine 64-cysteine 75, and cysteine 76-cysteine 81.

It belongs to the three-finger toxin family. Ancestral subfamily. As to expression, expressed by the venom gland.

The protein localises to the secreted. The chain is Probable weak neurotoxin 3FTx-Lio1 from Erythrolamprus poecilogyrus (Water snake).